We begin with the raw amino-acid sequence, 136 residues long: Urease subunit beta (136 aa).

Positions 112–136 (ENDEYAGVFGDNGTENVNKKGGKRS) are disordered.

Belongs to the urease beta subunit family. Heterotrimer of UreA (gamma), UreB (beta) and UreC (alpha) subunits. Three heterotrimers associate to form the active enzyme.

The protein localises to the cytoplasm. The catalysed reaction is urea + 2 H2O + H(+) = hydrogencarbonate + 2 NH4(+). It functions in the pathway nitrogen metabolism; urea degradation; CO(2) and NH(3) from urea (urease route): step 1/1. The chain is Urease subunit beta from Staphylococcus aureus (strain MRSA252).